A 274-amino-acid chain; its full sequence is tRNA-cytidine(32) 2-sulfurtransferase (274 aa).

A PP-loop motif motif is present at residues 40–45; that stretch reads SGGKDS. [4Fe-4S] cluster-binding residues include Cys115, Cys118, and Cys206.

Belongs to the TtcA family. In terms of assembly, homodimer. The cofactor is Mg(2+). Requires [4Fe-4S] cluster as cofactor.

The protein localises to the cytoplasm. It catalyses the reaction cytidine(32) in tRNA + S-sulfanyl-L-cysteinyl-[cysteine desulfurase] + AH2 + ATP = 2-thiocytidine(32) in tRNA + L-cysteinyl-[cysteine desulfurase] + A + AMP + diphosphate + H(+). It participates in tRNA modification. Catalyzes the ATP-dependent 2-thiolation of cytidine in position 32 of tRNA, to form 2-thiocytidine (s(2)C32). The sulfur atoms are provided by the cysteine/cysteine desulfurase (IscS) system. This chain is tRNA-cytidine(32) 2-sulfurtransferase, found in Ectopseudomonas mendocina (strain ymp) (Pseudomonas mendocina).